Here is a 155-residue protein sequence, read N- to C-terminus: 6,7-dimethyl-8-ribityllumazine synthase (155 aa).

Residues Phe-26, 60–62 (ALE), and 84–86 (AVI) contribute to the 5-amino-6-(D-ribitylamino)uracil site. 89–90 (ET) is a (2S)-2-hydroxy-3-oxobutyl phosphate binding site. The active-site Proton donor is the His-92. Asn-117 contributes to the 5-amino-6-(D-ribitylamino)uracil binding site. Arg-131 provides a ligand contact to (2S)-2-hydroxy-3-oxobutyl phosphate.

This sequence belongs to the DMRL synthase family.

It catalyses the reaction (2S)-2-hydroxy-3-oxobutyl phosphate + 5-amino-6-(D-ribitylamino)uracil = 6,7-dimethyl-8-(1-D-ribityl)lumazine + phosphate + 2 H2O + H(+). The protein operates within cofactor biosynthesis; riboflavin biosynthesis; riboflavin from 2-hydroxy-3-oxobutyl phosphate and 5-amino-6-(D-ribitylamino)uracil: step 1/2. In terms of biological role, catalyzes the formation of 6,7-dimethyl-8-ribityllumazine by condensation of 5-amino-6-(D-ribitylamino)uracil with 3,4-dihydroxy-2-butanone 4-phosphate. This is the penultimate step in the biosynthesis of riboflavin. This chain is 6,7-dimethyl-8-ribityllumazine synthase, found in Chromobacterium violaceum (strain ATCC 12472 / DSM 30191 / JCM 1249 / CCUG 213 / NBRC 12614 / NCIMB 9131 / NCTC 9757 / MK).